Here is a 398-residue protein sequence, read N- to C-terminus: Argininosuccinate synthase (398 aa).

8–16 (AYSGGLDTT) contributes to the ATP binding site. Residue Tyr-87 coordinates L-citrulline. Gly-117 contacts ATP. L-aspartate is bound by residues Thr-119, Asn-123, and Asp-124. Residue Asn-123 participates in L-citrulline binding. L-citrulline contacts are provided by Arg-127, Ser-175, Glu-259, and Tyr-271.

It belongs to the argininosuccinate synthase family. Type 1 subfamily. Homotetramer.

It is found in the cytoplasm. It carries out the reaction L-citrulline + L-aspartate + ATP = 2-(N(omega)-L-arginino)succinate + AMP + diphosphate + H(+). It functions in the pathway amino-acid biosynthesis; L-arginine biosynthesis; L-arginine from L-ornithine and carbamoyl phosphate: step 2/3. The sequence is that of Argininosuccinate synthase from Corynebacterium jeikeium (strain K411).